Consider the following 61-residue polypeptide: Large ribosomal subunit protein bL32 (61 aa).

Residues 1–10 (MAQPKKKTSN) are compositionally biased toward basic residues. Residues 1–23 (MAQPKKKTSNAKRDQRRATWKRK) form a disordered region.

Belongs to the bacterial ribosomal protein bL32 family.

In Gloeobacter violaceus (strain ATCC 29082 / PCC 7421), this protein is Large ribosomal subunit protein bL32.